The sequence spans 394 residues: Elongation factor Tu (394 aa).

Residues 10–204 (KPHVNIGTIG…AVDSYIPQPI (195 aa)) form the tr-type G domain. Residues 19 to 26 (GHVDHGKT) form a G1 region. 19–26 (GHVDHGKT) is a binding site for GTP. Threonine 26 is a binding site for Mg(2+). The segment at 60–64 (GITIS) is G2. The G3 stretch occupies residues 81–84 (DCPG). Residues 81 to 85 (DCPGH) and 136 to 139 (NKVD) each bind GTP. The interval 136 to 139 (NKVD) is G4. The interval 174–176 (SAL) is G5.

This sequence belongs to the TRAFAC class translation factor GTPase superfamily. Classic translation factor GTPase family. EF-Tu/EF-1A subfamily. As to quaternary structure, monomer.

It localises to the cytoplasm. It catalyses the reaction GTP + H2O = GDP + phosphate + H(+). GTP hydrolase that promotes the GTP-dependent binding of aminoacyl-tRNA to the A-site of ribosomes during protein biosynthesis. The sequence is that of Elongation factor Tu from Rickettsia typhi (strain ATCC VR-144 / Wilmington).